We begin with the raw amino-acid sequence, 381 residues long: tRNA-specific 2-thiouridylase MnmA (381 aa).

ATP is bound by residues 9–16 (GMSGGVDS) and Met-35. The interval 95 to 97 (NPD) is interaction with target base in tRNA. The active-site Nucleophile is Cys-100. Cys-100 and Cys-196 are disulfide-bonded. Residue Gly-124 participates in ATP binding. Residues 146–148 (KDQ) form an interaction with tRNA region. Cys-196 (cysteine persulfide intermediate) is an active-site residue. Positions 308-309 (RY) are interaction with tRNA.

This sequence belongs to the MnmA/TRMU family.

Its subcellular location is the cytoplasm. It carries out the reaction S-sulfanyl-L-cysteinyl-[protein] + uridine(34) in tRNA + AH2 + ATP = 2-thiouridine(34) in tRNA + L-cysteinyl-[protein] + A + AMP + diphosphate + H(+). Its function is as follows. Catalyzes the 2-thiolation of uridine at the wobble position (U34) of tRNA, leading to the formation of s(2)U34. This Paraburkholderia xenovorans (strain LB400) protein is tRNA-specific 2-thiouridylase MnmA.